Here is a 142-residue protein sequence, read N- to C-terminus: HTH-type transcriptional regulator MntR (142 aa).

In terms of domain architecture, HTH dtxR-type spans 1–63; that stretch reads MTTPSMEDYI…YEKYRGLVLT (63 aa). Residues D8, E11, H77, E99, E102, and H103 each coordinate Mn(2+).

It belongs to the DtxR/MntR family. Homodimer.

Its subcellular location is the cytoplasm. Its activity is regulated as follows. DNA binding is strongly activated by Mn(2+). Its function is as follows. Central regulator of manganese homeostasis. The polypeptide is HTH-type transcriptional regulator MntR (Bacillus velezensis (strain DSM 23117 / BGSC 10A6 / LMG 26770 / FZB42) (Bacillus amyloliquefaciens subsp. plantarum)).